A 358-amino-acid chain; its full sequence is MVPAELFARVEFPDHKILAQTKDFHDSLTKPPGSLGKLEQIGCFISACQGQIPPRPLNNSKIVVFAGDHGVATKGVSAYPSSVSLQMAENITNGGAAINVIARTTGTSVRLIDTSLDHEAWGDERVSRSCGSIDVEDAMTQEQVERALEIGKRIADQEVDAGADILIPGDLGIGNTTTAAALVGTFTLAEPVVVVGRGTGIDDEAWKLKVSAIRDAMFRVRDLRQDPIAIARKISSPDLAAMAAFIAQAAVRRTPVLLDGVVVTAAALLANKLAPGARRWFIAGHRSTEPAHSVALDALALDPILEFGMYLGEGSGAATALPMVKIAVDLMNDMSTFSSAGVDGPLNASSEAPEQNTE.

Glu313 (proton acceptor) is an active-site residue.

Belongs to the CobT family.

It carries out the reaction 5,6-dimethylbenzimidazole + nicotinate beta-D-ribonucleotide = alpha-ribazole 5'-phosphate + nicotinate + H(+). It functions in the pathway nucleoside biosynthesis; alpha-ribazole biosynthesis; alpha-ribazole from 5,6-dimethylbenzimidazole: step 1/2. Functionally, catalyzes the synthesis of alpha-ribazole-5'-phosphate from nicotinate mononucleotide (NAMN) and 5,6-dimethylbenzimidazole (DMB). The protein is Nicotinate-nucleotide--dimethylbenzimidazole phosphoribosyltransferase of Corynebacterium glutamicum (strain R).